We begin with the raw amino-acid sequence, 176 residues long: Ribosome rescue factor SmrB (176 aa).

A Smr domain is found at 93 to 168 (LDLHGYRQSE…GDAALLVLID (76 aa)).

It belongs to the SmrB family. Associates with collided ribosomes, but not with correctly translating polysomes.

Functionally, acts as a ribosome collision sensor. Detects stalled/collided disomes (pairs of ribosomes where the leading ribosome is stalled and a second ribosome has collided with it) and endonucleolytically cleaves mRNA at the 5' boundary of the stalled ribosome. Stalled/collided disomes form a new interface (primarily via the 30S subunits) that binds SmrB. Cleaved mRNA becomes available for tmRNA ligation, leading to ribosomal subunit dissociation and rescue of stalled ribosomes. The chain is Ribosome rescue factor SmrB from Shewanella baltica (strain OS195).